A 208-amino-acid chain; its full sequence is Probable GTP-binding protein EngB (208 aa).

Residues 23 to 205 enclose the EngB-type G domain; that stretch reads LTSEMVILGR…RQTLLKYLLT (183 aa). GTP-binding positions include 31 to 38, 57 to 61, 84 to 87, 154 to 157, and 182 to 184; these read GRSNVGKS, GKTRL, DLPG, TKFD, and FNA. Ser38 and Thr59 together coordinate Mg(2+).

It belongs to the TRAFAC class TrmE-Era-EngA-EngB-Septin-like GTPase superfamily. EngB GTPase family. It depends on Mg(2+) as a cofactor.

Functionally, necessary for normal cell division and for the maintenance of normal septation. In Helicobacter pylori (strain Shi470), this protein is Probable GTP-binding protein EngB.